The chain runs to 302 residues: Actin maturation protease (302 aa).

The disordered stretch occupies residues 1–26 (MPHTNEDPTAQQAGVILDPPPPLPPP). The peptidase C39-like stretch occupies residues 85–205 (SLIQEGPQCG…WAVISGVLFG (121 aa)). Residue Cys-93 is part of the active site.

The protein belongs to the ACTMAP family.

It is found in the cytoplasm. It carries out the reaction N-terminal N(alpha)-acetyl-L-methionyl-L-aspartyl-[protein] + H2O = N-terminal L-aspartyl-[protein] + N-acetyl-L-methionine. The enzyme catalyses N-terminal N(alpha)-acetyl-L-methionyl-L-glutamyl-[protein] + H2O = N-terminal L-glutamyl-[protein] + N-acetyl-L-methionine. The catalysed reaction is N-terminal N(alpha)-acetyl-L-cysteinyl-L-aspartyl-[protein] + H2O = N-terminal L-aspartyl-[protein] + N-acetyl-L-cysteine. It catalyses the reaction N-terminal N(alpha)-acetyl-L-cysteinyl-L-glutamyl-[protein] + H2O = N-terminal L-glutamyl-[protein] + N-acetyl-L-cysteine. Actin maturation protease that specifically mediates the cleavage of immature acetylated N-terminal actin, thereby contributing to actin maturation. Cleaves N-terminal acetylated methionine of immature cytoplasmic beta- and gamma-actin after translation. Cleaves N-terminal acetylated cysteine of muscle alpha-actin after canonical removal of N-terminal methionine. This is Actin maturation protease from Xenopus tropicalis (Western clawed frog).